Here is a 535-residue protein sequence, read N- to C-terminus: INSYN2B protein (535 aa).

Disordered regions lie at residues 23–85 (LVKQ…SFPR), 215–346 (EARE…RSSS), and 360–387 (KLPS…PRQE). The span at 46–59 (KNPTGVTEVNTQTP) shows a compositional bias: polar residues. Positions 219-232 (SALSPESSAEESNS) are enriched in low complexity. Polar residues-rich tracts occupy residues 258–269 (CSNTNSSASNMP), 307–319 (RTHS…SRSQ), and 361–375 (LPSQ…TGVG). A coiled-coil region spans residues 411–448 (DLQGRLQSVEESLHSNQEKIKVLLNVIQDLEKAHALTE). Residues 493 to 528 (LEEAEPTEEAPSPPKSPAEAPVPEKQDLRRKSKKVK) are disordered.

Belongs to the INSYN2 family.

The chain is INSYN2B protein (Insyn2b) from Mus musculus (Mouse).